The primary structure comprises 129 residues: Small ribosomal subunit protein uS11 (129 aa).

Belongs to the universal ribosomal protein uS11 family. In terms of assembly, part of the 30S ribosomal subunit. Interacts with proteins S7 and S18. Binds to IF-3.

Located on the platform of the 30S subunit, it bridges several disparate RNA helices of the 16S rRNA. Forms part of the Shine-Dalgarno cleft in the 70S ribosome. In Photobacterium profundum (strain SS9), this protein is Small ribosomal subunit protein uS11.